Reading from the N-terminus, the 97-residue chain is Carboxysome shell protein CsoS1B (97 aa).

Residues 8-93 (ALGMIETRGL…PHKEVEPVLT (86 aa)) form the BMC domain.

This sequence belongs to the bacterial microcompartments protein family. CsoS1 subfamily. As to quaternary structure, homohexamer with a small central pore.

The protein resides in the carboxysome. In terms of biological role, one of shell proteins of the carboxysome, a polyhedral inclusion where RuBisCO (ribulose bisphosphate carboxylase, ccbL-ccbS) is sequestered. Assembles into hexamers which make sheets that form the facets of the polyhedral carboxysome. The shell probably limits the diffusion of CO(2) into and out of the carboxysome. This Hydrogenovibrio crunogenus (strain DSM 25203 / XCL-2) (Thiomicrospira crunogena) protein is Carboxysome shell protein CsoS1B.